We begin with the raw amino-acid sequence, 180 residues long: Ribosome maturation factor RimM (180 aa).

Residues 99–179 (NNEYYWKDIV…IVIKNWKQTF (81 aa)) enclose the PRC barrel domain.

It belongs to the RimM family. As to quaternary structure, binds ribosomal protein uS19.

Its subcellular location is the cytoplasm. Functionally, an accessory protein needed during the final step in the assembly of 30S ribosomal subunit, possibly for assembly of the head region. Essential for efficient processing of 16S rRNA. May be needed both before and after RbfA during the maturation of 16S rRNA. It has affinity for free ribosomal 30S subunits but not for 70S ribosomes. This Buchnera aphidicola subsp. Baizongia pistaciae (strain Bp) protein is Ribosome maturation factor RimM.